The following is a 757-amino-acid chain: Tyrosine-protein kinase HTK16 (757 aa).

Positions Trp-10–Cys-102 constitute an SH2 1 domain. ANK repeat units lie at residues Gly-115–Ala-147, Ser-151–Ala-180, Asn-184–Lys-214, Asn-219–Pro-248, and Asp-252–Lys-281. One can recognise an SH2 2 domain in the interval Trp-287–Val-379. Disordered regions lie at residues Ser-381–Pro-407 and Pro-444–Asp-467. Over residues Glu-455 to Asp-467 the composition is skewed to polar residues. Positions Ile-484–Phe-740 constitute a Protein kinase domain. Residues Leu-490–Val-498 and Lys-516 contribute to the ATP site. Catalysis depends on Asp-608, which acts as the Proton acceptor. The residue at position 746 (Tyr-746) is a Phosphotyrosine.

Belongs to the protein kinase superfamily. Tyr protein kinase family. Epithelial cells.

The catalysed reaction is L-tyrosyl-[protein] + ATP = O-phospho-L-tyrosyl-[protein] + ADP + H(+). In terms of biological role, may be involved in signal transduction. The sequence is that of Tyrosine-protein kinase HTK16 (HTK16) from Hydra vulgaris (Hydra).